The primary structure comprises 174 residues: 16S rRNA aminocarboxypropyltransferase (174 aa).

Residues Thr26, Leu73, Leu97, and Ser116 each contribute to the S-adenosyl-L-methionine site.

It belongs to the TDD superfamily. TSR3 family.

It is found in the cytoplasm. It catalyses the reaction an N(1)-methylpseudouridine in rRNA + S-adenosyl-L-methionine = N(1)-methyl-N(3)-[(3S)-3-amino-3-carboxypropyl]pseudouridine in rRNA + S-methyl-5'-thioadenosine + H(+). Functionally, aminocarboxypropyltransferase that catalyzes the aminocarboxypropyl transfer on pseudouridine corresponding to position 914 in M.jannaschii 16S rRNA. It constitutes the last step in biosynthesis of the hypermodified N1-methyl-N3-(3-amino-3-carboxypropyl) pseudouridine (m1acp3-Psi). This chain is 16S rRNA aminocarboxypropyltransferase, found in Methanosarcina acetivorans (strain ATCC 35395 / DSM 2834 / JCM 12185 / C2A).